A 452-amino-acid polypeptide reads, in one-letter code: Keratin, type II cytoskeletal 80 (452 aa).

The segment at 1–82 (MACRSCVVGF…DPAVQQLKNQ (82 aa)) is head. S45 is subject to Phosphoserine. A coil 1A region spans residues 82–118 (QEKEEMKALNDKFASLIGKVQALEQRNQLLETRWSFL). Residues 83 to 394 (EKEEMKALND…KLVEGEEGRM (312 aa)) form the IF rod domain. Residues 119 to 135 (QGQDSAIFDLGHLYEEY) are linker 1. Residues 136-227 (QGRLQEELRK…TIYEQELKDL (92 aa)) are coil 1B. Positions 228 to 251 (AAQVKDVSVTVGMDSRCHIDLSGI) are linker 12. Residues 252 to 390 (VEEVKAQYDA…ATYRKLVEGE (139 aa)) form a coil 2 region. A tail region spans residues 391 to 452 (EGRMDSPSAT…YFSQESEVSE (62 aa)). Phosphoserine is present on S396. A disordered region spans residues 412 to 434 (AASRSGLSKAPSRKKKGSKGPVI).

The protein belongs to the intermediate filament family. In terms of assembly, heterotetramer of two type I and two type II keratins. Weakly expressed in tongue, but not skin or in any other tissues or organs examined.

This chain is Keratin, type II cytoskeletal 80 (KRT80), found in Homo sapiens (Human).